Reading from the N-terminus, the 738-residue chain is Squalene hopane cyclase afumA (738 aa).

2 PFTB repeats span residues 132 to 173 (GSQY…RIIG) and 321 to 361 (RRRC…KLHD). The active-site Proton donor is Asp460. PFTB repeat units lie at residues 482–523 (VRDA…ESLC), 581–621 (CARA…QYFK), and 634–675 (AARA…SQTA).

This sequence belongs to the terpene cyclase/mutase family.

Its pathway is secondary metabolite biosynthesis. Its function is as follows. Squalene hopane cyclase; part of the gene cluster that mediates the biosynthesis fumihopaside A, a hopane-type glucoside that enhances the thermotolerance and UV resistance of N.fumigata. The first step of fumihopaside A biosynthesis is performed by the squalene hopane cyclase afumA that catalyzes the cyclization of 3S-oxidosqualene into the hopene 21-beta-H-hopane-3-beta,22-diol. The cytochrome P450 monooxygenase afumB is responsible for both hydroxylation at C-24 and oxidations at C-30 of the afumA product. The glycosyltransferase afumC then catalyzes the glycosylation at C-24, using UDP-D-glucose as a donor, to produce fumihopaside A. AfumC is also able to accept UDP-D-galactose and UDP-D-glucuronic acid as donors to yield minor derivatives. Fumihopaside B, another minor derivative produced, is different from fumihopaside A due to the presence of a double bond between C-22 and C-29. The sequence is that of Squalene hopane cyclase afumA from Aspergillus fumigatus (strain CBS 144.89 / FGSC A1163 / CEA10) (Neosartorya fumigata).